A 191-amino-acid chain; its full sequence is dCTP deaminase (191 aa).

Residues 112 to 117, 136 to 138, Gln157, Tyr173, and Gln183 each bind dCTP; these read KSTYAR and TLE. Residue Glu138 is the Proton donor/acceptor of the active site.

Belongs to the dCTP deaminase family. In terms of assembly, homotrimer.

The enzyme catalyses dCTP + H2O + H(+) = dUTP + NH4(+). The protein operates within pyrimidine metabolism; dUMP biosynthesis; dUMP from dCTP (dUTP route): step 1/2. Catalyzes the deamination of dCTP to dUTP. The chain is dCTP deaminase from Psychrobacter sp. (strain PRwf-1).